Consider the following 385-residue polypeptide: Mitochondrial fission regulator 2 (385 aa).

Residue S2 is modified to N-acetylserine. At S119 the chain carries Phosphoserine. Residues 195–268 (SVDPDQLPGS…SHHSKSQRNK (74 aa)) are disordered. The segment covering 207–216 (SPPPPPPLPP) has biased composition (pro residues). The span at 231-257 (PGSNNICDSDNPATEMSKQNPAANKTN) shows a compositional bias: polar residues. Phosphoserine occurs at positions 291 and 328. Residues 331 to 363 (KENRSWESSPFSSPETSRFGHHISQSEGQRTKE) form a disordered region. Positions 336–346 (WESSPFSSPET) are enriched in polar residues.

Belongs to the MTFR1 family.

The protein localises to the mitochondrion. May play a role in mitochondrial aerobic respiration essentially in the testis. Can also promote mitochondrial fission. The chain is Mitochondrial fission regulator 2 (MTFR2) from Homo sapiens (Human).